The sequence spans 401 residues: O-antigen ligase (401 aa).

Over 1–20 the chain is Cytoplasmic; it reads MFAATRLSRLRHDTSRILSH. A helical membrane pass occupies residues 21–37; it reads WILPLGWLALLTGMFWV. At 38 to 42 the chain is on the periplasmic side; that stretch reads GDRSD. Residues 43–61 traverse the membrane as a helical segment; the sequence is YHRLFYILLAAPTLLYVIL. At 62-72 the chain is on the cytoplasmic side; that stretch reads QPRLLRPLTGS. A helical transmembrane segment spans residues 73-92; the sequence is PLFIAFLAFSSYMMLSLSWS. Topologically, residues 93-103 are periplasmic; it reads TPENSTGSLLK. A helical membrane pass occupies residues 104-122; that stretch reads RPLYIALLFFCAAILALEA. The Cytoplasmic segment spans residues 123–129; that stretch reads PLRLKTA. The helical transmembrane segment at 130-150 threads the bilayer; it reads TWLAALGAVISAAATLLRYYW. The Periplasmic portion of the chain corresponds to 151–161; sequence DANPLRLTGYG. The chain crosses the membrane as a helical span at residues 162–183; that stretch reads ALYNPLLSAHVYGAFTALWLAY. The Cytoplasmic portion of the chain corresponds to 184–189; that stretch reads WMQSRP. The chain crosses the membrane as a helical span at residues 190–208; it reads ILAPLPLISLALLGGLLIA. Residues 209–212 lie on the Periplasmic side of the membrane; the sequence is TGSR. A helical membrane pass occupies residues 213 to 229; the sequence is TPLVGLTAALMWLVLAG. The Cytoplasmic segment spans residues 230–234; it reads DRKKA. A helical membrane pass occupies residues 235–252; that stretch reads LIALALALAGALLGYILY. Residues 253-306 are Periplasmic-facing; the sequence is PEVITQRGASFRPEIWADALRQISEHPWLGHGYDHPMRIVLSNGMLLADPHNIE. The segment at 258–319 is WZY-C; sequence QRGASFRPEI…LFAGGIIGLL (62 aa). Residues 307–331 traverse the membrane as a helical segment; sequence LGVLFAGGIIGLLLWVAIYALAFGF. At 332-339 the chain is on the cytoplasmic side; sequence SWKNRKSP. The helical transmembrane segment at 340 to 357 threads the bilayer; the sequence is AVLLASTWLVFGLAAGLT. The Periplasmic segment spans residues 358 to 368; that stretch reads EGNAFLPRPKE. The helical transmembrane segment at 369-385 threads the bilayer; it reads HWFLIWIPMALLYALWI. Over 386–401 the chain is Cytoplasmic; sequence QQRFAASRRGEDIAAP.

It belongs to the O-antigen ligase family. Homodimer.

The protein resides in the cell inner membrane. It carries out the reaction a lipid-linked O antigen + a lipid A-core oligosaccharide = a lipopolysaccharide + a polyisoprenyl diphosphate.. It participates in bacterial outer membrane biogenesis; lipopolysaccharide biosynthesis. Its activity is regulated as follows. Activity does not require ATP and magnesium ions. Functionally, transferase involved in the biosynthesis of the lipopolysaccharide (LPS). Catalyzes the transfer of a polymerized O-antigen molecule from its polyprenyl diphosphate membrane anchor to a terminal sugar of the lipid A-core oligosaccharide, finalizing the biosynthesis of the lipopolysaccharide. Required for the attachment of both A-band and B-band O-antigens, two forms of O-antigen produced by P.aeruginosa, onto the lipid A-core receptors. Important for cell wall integrity and motility of the bacteria. This is O-antigen ligase from Pseudomonas aeruginosa (strain ATCC 15692 / DSM 22644 / CIP 104116 / JCM 14847 / LMG 12228 / 1C / PRS 101 / PAO1).